Consider the following 168-residue polypeptide: MKILVIQGPNLNMLGHRDPRLYGMVTLDQIHEIMQTFVKQSNLDVELEFFQTNFEGEIIDKIQESVGSDYEGIIINPGAFSHTSIAIADAIMLAGKPVIEVHLTNIQAREEFRKNSYTGAACGGVIMGFGPLGYNMALMAMVNILAEMKAFQEAQQNNPNNSINNINN.

Y22 acts as the Proton acceptor in catalysis. Residues N76, H82, and D89 each contribute to the substrate site. The active-site Proton donor is the H102. Substrate is bound by residues 103–104 (LT) and R113.

This sequence belongs to the type-II 3-dehydroquinase family. Homododecamer.

It carries out the reaction 3-dehydroquinate = 3-dehydroshikimate + H2O. The protein operates within metabolic intermediate biosynthesis; chorismate biosynthesis; chorismate from D-erythrose 4-phosphate and phosphoenolpyruvate: step 3/7. Functionally, catalyzes a trans-dehydration via an enolate intermediate. This chain is 3-dehydroquinate dehydratase, found in Helicobacter acinonychis (strain Sheeba).